A 116-amino-acid polypeptide reads, in one-letter code: Large ribosomal subunit protein bL17 (116 aa).

The protein belongs to the bacterial ribosomal protein bL17 family. As to quaternary structure, part of the 50S ribosomal subunit. Contacts protein L32.

The sequence is that of Large ribosomal subunit protein bL17 from Helicobacter acinonychis (strain Sheeba).